A 579-amino-acid chain; its full sequence is Nuclear receptor coactivator 5 (579 aa).

An N-acetylmethionine modification is found at Met-1. The tract at residues 1 to 77 (MNTAPSRPSP…DIRDHRDSRS (77 aa)) is disordered. The interval 1 to 158 (MNTAPSRPSP…RDSFDGRGPP (158 aa)) is transcription repression. Thr-3 is subject to Phosphothreonine. 9 positions are modified to phosphoserine: Ser-9, Ser-21, Ser-29, Ser-34, Ser-96, Ser-116, Ser-126, Ser-143, and Ser-151. Positions 11 to 77 (TRRDPYSFGD…DIRDHRDSRS (67 aa)) are enriched in basic and acidic residues. The tract at residues 148-172 (YRDSFDGRGPPGPESQSRAKERLKR) is disordered. A Phosphothreonine modification is found at Thr-274. An LXXLL motif motif is present at residues 345–349 (LINLL). A phosphoserine mark is found at Ser-378 and Ser-381. Disordered stretches follow at residues 378–428 (SADS…PTSQ) and 446–529 (ANSS…RPVS). Low complexity-rich tracts occupy residues 395–420 (SGSS…ATPT) and 446–460 (ANSS…TGSS). The interval 458–579 (GSSQNQNFST…APMGSYQRHY (122 aa)) is transcription activation. The span at 461 to 485 (QNQNFSTAANSQPQQRPQASGNQPP) shows a compositional bias: polar residues.

Binds HTATIP2/TIP30. Interacts with YLPM1. Forms a complex with ILF2, ILF3, YLPM1, KHDRBS1, RBMX and PPP1CA.

The protein resides in the nucleus. In terms of biological role, nuclear receptor coregulator that can have both coactivator and corepressor functions. Interacts with nuclear receptors for steroids (ESR1 and ESR2) independently of the steroid binding domain (AF-2) of the ESR receptors, and with the orphan nuclear receptor NR1D2. Involved in the coactivation of nuclear steroid receptors (ER) as well as the corepression of MYC in response to 17-beta-estradiol (E2). The sequence is that of Nuclear receptor coactivator 5 (Ncoa5) from Mus musculus (Mouse).